The primary structure comprises 140 residues: Profilin (140 aa).

The protein belongs to the profilin family. In terms of assembly, occurs in many kinds of cells as a complex with monomeric actin in a 1:1 ratio.

Its function is as follows. Binds to actin and affects the structure of the cytoskeleton. At high concentrations, profilin prevents the polymerization of actin, whereas it enhances it at low concentrations. By binding to PIP2, it inhibits the formation of IP3 and DG. The sequence is that of Profilin from Suberites domuncula (Sponge).